Consider the following 395-residue polypeptide: Xylose isomerase (395 aa).

Residues H54 and D57 contribute to the active site. Positions 181, 217, 220, 245, 255, 257, and 293 each coordinate Mg(2+).

This sequence belongs to the xylose isomerase family. Homotetramer. It depends on Mg(2+) as a cofactor.

It localises to the cytoplasm. The enzyme catalyses alpha-D-xylose = alpha-D-xylulofuranose. The polypeptide is Xylose isomerase (xylA) (Arthrobacter sp. (strain NRRL B3728)).